Reading from the N-terminus, the 200-residue chain is Large ribosomal subunit protein uL4 (200 aa).

Positions 42 to 65 (TRAHKSRADVSGGGKKPFRQKGTG) are disordered.

The protein belongs to the universal ribosomal protein uL4 family. In terms of assembly, part of the 50S ribosomal subunit.

Its function is as follows. One of the primary rRNA binding proteins, this protein initially binds near the 5'-end of the 23S rRNA. It is important during the early stages of 50S assembly. It makes multiple contacts with different domains of the 23S rRNA in the assembled 50S subunit and ribosome. In terms of biological role, forms part of the polypeptide exit tunnel. The sequence is that of Large ribosomal subunit protein uL4 from Acinetobacter baumannii (strain AB307-0294).